The following is a 282-amino-acid chain: Shikimate dehydrogenase (NADP(+)) (282 aa).

Residues serine 24 to serine 26 and threonine 71 each bind shikimate. The active-site Proton acceptor is lysine 75. Residue aspartate 87 coordinates NADP(+). Shikimate is bound by residues asparagine 96 and aspartate 112. NADP(+)-binding positions include glycine 138 to alanine 142, asparagine 162 to arginine 167, and leucine 227. Tyrosine 229 is a binding site for shikimate. Glycine 250 provides a ligand contact to NADP(+).

It belongs to the shikimate dehydrogenase family. Homodimer.

The catalysed reaction is shikimate + NADP(+) = 3-dehydroshikimate + NADPH + H(+). It participates in metabolic intermediate biosynthesis; chorismate biosynthesis; chorismate from D-erythrose 4-phosphate and phosphoenolpyruvate: step 4/7. Functionally, involved in the biosynthesis of the chorismate, which leads to the biosynthesis of aromatic amino acids. Catalyzes the reversible NADPH linked reduction of 3-dehydroshikimate (DHSA) to yield shikimate (SA). The chain is Shikimate dehydrogenase (NADP(+)) from Paracoccus denitrificans (strain Pd 1222).